Here is a 100-residue protein sequence, read N- to C-terminus: Large ribosomal subunit protein uL23 (100 aa).

Belongs to the universal ribosomal protein uL23 family. As to quaternary structure, part of the 50S ribosomal subunit. Contacts protein L29, and trigger factor when it is bound to the ribosome.

Functionally, one of the early assembly proteins it binds 23S rRNA. One of the proteins that surrounds the polypeptide exit tunnel on the outside of the ribosome. Forms the main docking site for trigger factor binding to the ribosome. The polypeptide is Large ribosomal subunit protein uL23 (Shewanella denitrificans (strain OS217 / ATCC BAA-1090 / DSM 15013)).